The chain runs to 667 residues: Gamma-tubulin complex component 4 (667 aa).

Residues His-425–Ala-445 form a disordered region.

Belongs to the TUBGCP family. As to quaternary structure, component of the gamma-tubulin ring complex (gTuRC) consisting of TUBGCP2, TUBGCP3, TUBGCP4, TUBGCP5 and TUBGCP6 and gamma-tubulin TUBG1 or TUBG2. TUBGCP2, TUBGCP3, TUBGCP4, TUBGCP5 and TUBGCP6 assemble in a 5:5:2:1:1 stoichiometry; each is associated with a gamma-tubulin, thereby arranging 14 gamma-tubulins in a helical manner. Gamma-tubulin at the first position is blocked by TUBGCP3 at the last position, allowing 13 protafilaments to grow into a microtubule. The gTuRC (via TUBGCP3 and TUBGCP6) interacts with ACTB and MZT1; the interactions form a luminal bridge that stabilizes the initial structure during complex assembly. The gTuRC (via TUBGCP2) interacts with MZT2A/MZT2B and CDK5RAP2 (via CM1 motif); the interactions play a role in gTuRC activation. Interacts with NINL. Interacts with ATF5; the ATF5:PCNT:polyglutamylated tubulin (PGT) tripartite unites the mother centriole and the pericentriolar material (PCM) in the centrosome. In terms of tissue distribution, ubiquitously expressed.

Its subcellular location is the cytoplasm. The protein resides in the cytoskeleton. It localises to the microtubule organizing center. The protein localises to the centrosome. Functionally, component of the gamma-tubulin ring complex (gTuRC) which mediates microtubule nucleation. The gTuRC regulates the minus-end nucleation of alpha-beta tubulin heterodimers that grow into microtubule protafilaments, a critical step in centrosome duplication and spindle formation. The polypeptide is Gamma-tubulin complex component 4 (TUBGCP4) (Homo sapiens (Human)).